A 488-amino-acid polypeptide reads, in one-letter code: MKKYIYIYFFFITITINDLVINNTSKCVSIERRKNNAYINYGIGYNGPDNKITKSRRCKRIKLCKKDLIDIGAIKKPINVAIFGSTGSIGTNALNIIRECNKIENVFNVKALYVNKSVNELYEQAREFLPEYLCIHDKSVYEELKELVKNIKDYKPIILCGDEGMKEICSSNSIDKIVIGIDSFQGLYSTMYAIMNNKIVALANKESIVSAGFFLKKLLNIHKNAKIIPVDSEHSAIFQCLDNNKVLKTKCLQDNFSKINNINKIFLCSSGGPFQNLTMDELKNVTSENALKHPKWKMGKKITIDSATMMNKGLEVIETHFLFDVDYNDIEVIVHKECIIHSCVEFIDKSVISQMYYPDMQIPILYSLTWPDRIKTNLKPLDLAQVSTLTFHKPSLEHFPCIKLAYQAGIKGNFYPTVLNASNEIANNLFLNNKIKYFDISSIISQVLESFNSQKVSENSEDLMKQILQIHSWAKDKATDIYNKHNSS.

An apicoplast-targeting transit peptide spans 1–72; sequence MKKYIYIYFF…LCKKDLIDIG (72 aa). NADP(+) contacts are provided by residues 86–89 and 115–117; these read TGSI and NKS. Position 205 (Lys-205) interacts with 1-deoxy-D-xylulose 5-phosphate. NADP(+) is bound at residue Glu-206. Asp-231 is a binding site for Mn(2+). 4 residues coordinate 1-deoxy-D-xylulose 5-phosphate: Ser-232, Glu-233, Ser-270, and His-293. Position 233 (Glu-233) interacts with Mn(2+). Gly-299 contributes to the NADP(+) binding site. 1-deoxy-D-xylulose 5-phosphate is bound by residues Ser-306, Asn-311, Lys-312, and Glu-315. Glu-315 serves as a coordination point for Mn(2+).

This sequence belongs to the DXR family. As to quaternary structure, homodimer. The cofactor is Mg(2+). It depends on Mn(2+) as a cofactor.

Its subcellular location is the plastid. It localises to the apicoplast. The enzyme catalyses 2-C-methyl-D-erythritol 4-phosphate + NADP(+) = 1-deoxy-D-xylulose 5-phosphate + NADPH + H(+). It functions in the pathway isoprenoid biosynthesis; isopentenyl diphosphate biosynthesis via DXP pathway; isopentenyl diphosphate from 1-deoxy-D-xylulose 5-phosphate: step 1/6. Inhibited by fosmidomycin and its derivatives. Catalyzes the NADPH-dependent rearrangement and reduction of 1-deoxy-D-xylulose-5-phosphate (DXP) to 2-C-methyl-D-erythritol 4-phosphate (MEP). The chain is 1-deoxy-D-xylulose 5-phosphate reductoisomerase, apicoplastic (DXR) from Plasmodium falciparum (isolate 3D7).